The chain runs to 406 residues: Nuclear hormone receptor family member nhr-133 (406 aa).

The nuclear receptor DNA-binding region spans 8-83; sequence SGPCEICEQP…VGMNSSKFQN (76 aa). Residues 11 to 31 form an NR C4-type zinc finger; the sequence is CEICEQPAHGNHFGVLSCRAC. Residues 47 to 66 form an NR C4-type; degenerate zinc finger; that stretch reads DRVCRKGNCIGNDLYRCKIC. Residues 150–406 enclose the NR LBD domain; sequence YSWSPNHYPN…YSHPEMFEFS (257 aa).

Belongs to the nuclear hormone receptor family.

It localises to the nucleus. Its function is as follows. Orphan nuclear receptor. In Caenorhabditis elegans, this protein is Nuclear hormone receptor family member nhr-133.